The following is a 271-amino-acid chain: Probable ribosomal RNA small subunit methyltransferase A (271 aa).

6 residues coordinate S-adenosyl-L-methionine: asparagine 22, leucine 24, glycine 49, glutamate 70, aspartate 97, and asparagine 112.

It belongs to the class I-like SAM-binding methyltransferase superfamily. rRNA adenine N(6)-methyltransferase family. RsmA subfamily.

It localises to the cytoplasm. In terms of biological role, specifically dimethylates two adjacent adenosines in the loop of a conserved hairpin near the 3'-end of 16S rRNA in the 30S particle. May play a critical role in biogenesis of 30S subunits. The polypeptide is Probable ribosomal RNA small subunit methyltransferase A (Methanosphaera stadtmanae (strain ATCC 43021 / DSM 3091 / JCM 11832 / MCB-3)).